The following is an 897-amino-acid chain: MQTHEIRKRFLDHFVKAGHTEVPSASVILDDPNLLFVNAGMVQFVPFFLGQRTPPYQRATSIQKCIRTPDIDEVGITTRHNTFFQMAGNFSFGDYFKKGAIEFAWTLLTNPVDQSGYGFDPEKLWATVYLDDDEAIQLWQEVAGLPLERIQRRGMADNYWSMGIPGPCGPSSEIYVDRGPEYGIEGGPEANEDRYIEIWNLVFMQNERGEGTGKSDFEILGPLPRKNIDTGMGIERVACLLQGVDNVYETDLLRPVIDAVAARAPRGYGRGSHSDDVRYRIIADHSRTAAILIGDGVSPGNDGRGYVLRRLLRRVIRSAKLLGIDDAVVGDLMATVRDAMGPSYPELVTDFDRIQRIAVAEETAFNRTLSSGSRLFEEAAQSTKAAGADRLSGRDAFTLHDTYGFPIELTLEMAAEADLAVDEEGFRSLMAEQRQRAKADAAARKQAHTDLTAYRELVDAHPTQFTGFDELTTEARILGIFVDGRRVPVVGHDTATAQHRIELVLDRSPFYAESGGQIADEGTITGTGASQTAKAAVSDVQKIAKTLWVHRVTVESGEFVEGDTVTAAVDPRWRHGATQGHSGTHMVHAALRQVLGPNAVQAGSLNRPGYLRFDFNWQGALTDDQRTQIEEVTNEAVEADFEVHSFTTELEKAKSMGAMALFGEAYPDEVRVVEIGGPFSLELCGGTHVRSSAQIGPVTILGESSVGSGVRRVEAYVGLDSFRHLAKERALMAGLASSLKVPSEEVPARVAGLVERLKAAEKELDRMRLANARAAAVNAVAGAERVGKVRLVAQRMAGGMSAGDLRTLVGDIRGKLGGDPAVVALIAEGDNDTVPFVVAVNPAAQDLGLRANELVKQFGAAVNGRGGGKADLAQGSGKGAAGIDAALAALRAEIDRS.

H581, H585, C684, and H688 together coordinate Zn(2+).

This sequence belongs to the class-II aminoacyl-tRNA synthetase family. Zn(2+) serves as cofactor.

The protein localises to the cytoplasm. It catalyses the reaction tRNA(Ala) + L-alanine + ATP = L-alanyl-tRNA(Ala) + AMP + diphosphate. Functionally, catalyzes the attachment of alanine to tRNA(Ala) in a two-step reaction: alanine is first activated by ATP to form Ala-AMP and then transferred to the acceptor end of tRNA(Ala). Also edits incorrectly charged Ser-tRNA(Ala) and Gly-tRNA(Ala) via its editing domain. The polypeptide is Alanine--tRNA ligase (Mycobacterium sp. (strain JLS)).